Consider the following 547-residue polypeptide: uncharacterized protein (547 aa).

The next 12 helical transmembrane spans lie at 33–53, 107–127, 145–165, 203–223, 231–251, 263–283, 298–318, 351–371, 397–417, 432–452, 470–490, and 499–519; these read PTFFFALFSAAYVFIDQIMVI, PLIVLLNAINIFIPLGTGVIF, TGLISTTVFGLITQFLVLSFA, VYILIGLNIIPMLSRLFFYLA, FIAIVPPIANLINILIVFLLV, VAGILGYLINFLAYIIYLIYL, LNKIDFNLLVVVSLIGMASFF, TLLTGPIAISNLASAAIFGLL, TVIICISFGSLIYLLTAVAFG, LDLANYFSLIVQAQVFFVATG, IVSLTHGLFVFIPLLFIFQAI, and VFIWLLTANAALAGLINIAFG.

It localises to the cell membrane. This is an uncharacterized protein from Mycoplasma genitalium (strain ATCC 33530 / DSM 19775 / NCTC 10195 / G37) (Mycoplasmoides genitalium).